The primary structure comprises 503 residues: MSAVMTTIRVFDTTLRDGEQMPGVSLPLEYKIRIAKQLDKLGVDVIEAGFPSATKGEFESVKEISSLSLNAEICGLARIVKEDIDAAINANVDMVHIFVPTSRIQIEHTVKMSKEEIIEKSVECVEYIKSHGVKCMFSAMDATRTEVEYLKQIFKAVENAKVDIVNVPDTVGVATPFKFYELIKQLREHLKVPIDVHCHNDFGLAVANTYAAVMAGANEVQVTVNGIGERAGNADLAQVVMILHAIEGIKTNIKTEHLFETSKLVERLTGVKMPPNHPIVGENAFSHESGIHAHGVLKEYSTFEPGVVTPEMVGHKRRIVIGKHAGRYQIKKILEEAGYHLDDEKLNQIFEKVKEMGDKGKRVTDLDLFAIAEVVIGELKREEKAILVDEVTVLTGNKITPTAVLNAEVFGHRKVTSAIGVGPVDASLKAVTSLVGESIRITEFRMDAITGGSDALAEVYVTVEDDEGHSFTSRGAAQDIVMASIDAVINAVNYLLRMKRRKS.

A Pyruvate carboxyltransferase domain is found at 8-259 (IRVFDTTLRD…KTNIKTEHLF (252 aa)). Residues D17, H197, H199, and N233 each coordinate a divalent metal cation.

It belongs to the alpha-IPM synthase/homocitrate synthase family. As to quaternary structure, homodimer. A divalent metal cation serves as cofactor.

The catalysed reaction is 3-methyl-2-oxobutanoate + acetyl-CoA + H2O = (2S)-2-isopropylmalate + CoA + H(+). It functions in the pathway amino-acid biosynthesis; L-leucine biosynthesis; L-leucine from 3-methyl-2-oxobutanoate: step 1/4. Catalyzes the condensation of the acetyl group of acetyl-CoA with 3-methyl-2-oxobutanoate (2-oxoisovalerate) to form 3-carboxy-3-hydroxy-4-methylpentanoate (2-isopropylmalate). In Archaeoglobus fulgidus (strain ATCC 49558 / DSM 4304 / JCM 9628 / NBRC 100126 / VC-16), this protein is Probable 2-isopropylmalate synthase (leuA).